Consider the following 408-residue polypeptide: Putative mannan endo-1,4-beta-mannosidase 4 (408 aa).

An N-terminal signal peptide occupies residues M1–A23. N73 carries N-linked (GlcNAc...) asparagine glycosylation. Substrate is bound by residues W85 and N201. Residue E202 is the Proton donor of the active site. E322 serves as the catalytic Nucleophile. Substrate is bound at residue W364.

It belongs to the glycosyl hydrolase 5 (cellulase A) family.

The protein resides in the secreted. It catalyses the reaction Random hydrolysis of (1-&gt;4)-beta-D-mannosidic linkages in mannans, galactomannans and glucomannans.. This is Putative mannan endo-1,4-beta-mannosidase 4 (MAN4) from Arabidopsis thaliana (Mouse-ear cress).